Here is a 324-residue protein sequence, read N- to C-terminus: Glyoxylate/hydroxypyruvate reductase B (324 aa).

Residues Arg-237 and Glu-266 contribute to the active site. His-285 acts as the Proton donor in catalysis.

It belongs to the D-isomer specific 2-hydroxyacid dehydrogenase family. GhrB subfamily. Homodimer.

It localises to the cytoplasm. The enzyme catalyses glycolate + NADP(+) = glyoxylate + NADPH + H(+). The catalysed reaction is (R)-glycerate + NAD(+) = 3-hydroxypyruvate + NADH + H(+). It carries out the reaction (R)-glycerate + NADP(+) = 3-hydroxypyruvate + NADPH + H(+). In terms of biological role, catalyzes the NADPH-dependent reduction of glyoxylate and hydroxypyruvate into glycolate and glycerate, respectively. In Escherichia coli (strain K12 / MC4100 / BW2952), this protein is Glyoxylate/hydroxypyruvate reductase B.